A 205-amino-acid polypeptide reads, in one-letter code: Probable GTP-binding protein EngB (205 aa).

Residues 8-195 form the EngB-type G domain; sequence RDAEVVLIGR…NEAVRHHLHE (188 aa). GTP contacts are provided by residues 16 to 23, 41 to 45, 60 to 63, 140 to 143, and 175 to 177; these read GRSNVGKS, GVTRS, DLPG, NKMD, and ISA. S23 and T43 together coordinate Mg(2+).

Belongs to the TRAFAC class TrmE-Era-EngA-EngB-Septin-like GTPase superfamily. EngB GTPase family. It depends on Mg(2+) as a cofactor.

Functionally, necessary for normal cell division and for the maintenance of normal septation. In Haloarcula marismortui (strain ATCC 43049 / DSM 3752 / JCM 8966 / VKM B-1809) (Halobacterium marismortui), this protein is Probable GTP-binding protein EngB.